Reading from the N-terminus, the 215-residue chain is Nascent polypeptide-associated complex subunit alpha (215 aa).

Residues 1–81 (MPGEATETVP…SEKKARKAMS (81 aa)) are disordered. Residues 9-21 (VPVTEQEMQQPQV) show a composition bias toward polar residues. The segment covering 29 to 42 (SDSDDSVPELEEQD) has biased composition (acidic residues). Residues 43–57 (SAQTQTQQAQLAAAA) show a composition bias toward low complexity. Residues 70–135 (SRSEKKARKA…AKIEDLSQQA (66 aa)) enclose the NAC-A/B domain. Positions 176–213 (VEVKDIELVMSQANVSRAKAVRALKNNNNDIVNAIMEL) constitute a UBA domain.

It belongs to the NAC-alpha family.

Its function is as follows. May promote appropriate targeting of ribosome-nascent polypeptide complexes. In Oreochromis niloticus (Nile tilapia), this protein is Nascent polypeptide-associated complex subunit alpha (naca).